The following is a 1446-amino-acid chain: Receptor-type tyrosine-protein phosphatase U (1446 aa).

Positions 1–18 are cleaved as a signal peptide; sequence MARAQALVLALTFQFCAP. Residues 19–749 lie on the Extracellular side of the membrane; that stretch reads ETETPAAGCT…QRSEEMGLIL (731 aa). The MAM domain occupies 25–188; the sequence is AGCTFEEASD…ILLFSYPCAK (164 aa). Asn-75 carries N-linked (GlcNAc...) asparagine glycosylation. The region spanning 190-275 is the Ig-like C2-type domain; it reads PHFSRLGDVE…SQAPRGAGVS (86 aa). A disulfide bridge links Cys-210 with Cys-264. 4 consecutive Fibronectin type-III domains span residues 288–383, 386–484, 485–591, and 592–668; these read PIAP…CAEP, APKG…TDED, VPGG…SAPS, and FDYA…FGAE. Asn-410 is a glycosylation site (N-linked (GlcNAc...) asparagine). Asn-685 carries N-linked (GlcNAc...) asparagine glycosylation. Residues 750–770 traverse the membrane as a helical segment; the sequence is GICAGGLAVLILLLGAIIVII. The tract at residues 771–887 is mediates interaction with CTNNB1; that stretch reads RKGRDRYAYS…DLLQHINQMK (117 aa). Residues 771-1446 are Cytoplasmic-facing; that stretch reads RKGRDRYAYS…LEYLEALELR (676 aa). Residues 830–867 form a disordered region; it reads PGYSPRGDQRSGGVTEASSLLGGSPRRPCGRKGSPYHT. Ser-848, Ser-853, and Ser-863 each carry phosphoserine. At Tyr-865 the chain carries Phosphotyrosine. Tyrosine-protein phosphatase domains follow at residues 888-1144 and 1176-1439; these read TAEG…ILEA and LREE…ALEY. Residues Glu-1053, 1085–1091, and Gln-1129 each bind substrate; that span reads CSAGTGR. The active-site Phosphocysteine intermediate is the Cys-1085. Cys-1380 serves as the catalytic Phosphocysteine intermediate.

The protein belongs to the protein-tyrosine phosphatase family. Receptor class 2B subfamily. As to quaternary structure, forms homooligomeric complexes which mediate cell homotypic adhesion. Interacts (via the cytoplasmic juxtamembrane domain) with CTNNB1; may mediate interaction with the cadherin/catenin adhesion complex. Interacts with KIT. May interact with AP3B1. In terms of processing, the extracellular domain is proteolytically processed through cleavage within the fibronectin type-III 4 domain. In addition to the 190 kDa full-length protein, proteolytic products of 100 kDa, 80 kDa and 73 kDa are observed. Post-translationally, N-glycosylated. Phosphorylated on tyrosine residues upon activation of KIT with stem cell factor (SCF). The 73 kDa proteolytic product is not phosphorylated. In terms of tissue distribution, transcripts of different sizes are differentially expressed in a subset of tissues. Detected in brain, lung, skeletal muscle, heart, kidney and placenta. In brain; expressed in olfactory bulb, cerebral cortex, hippocampus and cerebellum.

The protein localises to the cell junction. It localises to the cell membrane. It carries out the reaction O-phospho-L-tyrosyl-[protein] + H2O = L-tyrosyl-[protein] + phosphate. Its function is as follows. Tyrosine-protein phosphatase which dephosphorylates CTNNB1. Regulates CTNNB1 function both in cell adhesion and signaling. May function in cell proliferation and migration and play a role in the maintenance of epithelial integrity. May play a role in megakaryocytopoiesis. The chain is Receptor-type tyrosine-protein phosphatase U (Ptpru) from Mus musculus (Mouse).